Reading from the N-terminus, the 198-residue chain is Thioredoxin reductase-like selenoprotein T homolog CG3887 (198 aa).

Residues 1-25 (MERLTGRNVALLVLCLCAGYALVFA) form the signal peptide. The cysteines at positions 49 and 52 are disulfide-linked.

Belongs to the SelWTH family. SELT subfamily.

The enzyme catalyses [thioredoxin]-dithiol + NADP(+) = [thioredoxin]-disulfide + NADPH + H(+). Functionally, probably has thioredoxin reductase-like oxidoreductase activity. The chain is Thioredoxin reductase-like selenoprotein T homolog CG3887 from Drosophila melanogaster (Fruit fly).